A 94-amino-acid polypeptide reads, in one-letter code: Large ribosomal subunit protein eL42 (94 aa).

Residues C11, C14, C71, and C74 each contribute to the Zn(2+) site. Residues 11-74 form a C4-type zinc finger; the sequence is CPFCKRHTIH…LDLRFRCTVC (64 aa).

It belongs to the eukaryotic ribosomal protein eL42 family. In terms of assembly, part of the 50S ribosomal subunit. Zn(2+) serves as cofactor.

Its function is as follows. Binds to the 23S rRNA. This Pyrococcus abyssi (strain GE5 / Orsay) protein is Large ribosomal subunit protein eL42.